The sequence spans 240 residues: Orotidine 5'-phosphate decarboxylase (240 aa).

Substrate contacts are provided by residues Asp-10, Lys-32, 59–68, Thr-122, Arg-183, Gln-192, Gly-212, and Arg-213; that span reads DLKLHDIPNT. Lys-61 (proton donor) is an active-site residue.

The protein belongs to the OMP decarboxylase family. Type 1 subfamily. Homodimer.

It carries out the reaction orotidine 5'-phosphate + H(+) = UMP + CO2. Its pathway is pyrimidine metabolism; UMP biosynthesis via de novo pathway; UMP from orotate: step 2/2. Functionally, catalyzes the decarboxylation of orotidine 5'-monophosphate (OMP) to uridine 5'-monophosphate (UMP). The polypeptide is Orotidine 5'-phosphate decarboxylase (Carboxydothermus hydrogenoformans (strain ATCC BAA-161 / DSM 6008 / Z-2901)).